We begin with the raw amino-acid sequence, 230 residues long: Lipoprotein-releasing system ATP-binding protein LolD (230 aa).

The region spanning 10–228 (LRAEHLSKVY…QLHMANGRLL (219 aa)) is the ABC transporter domain. Residue 46–53 (GASGSGKS) coordinates ATP.

Belongs to the ABC transporter superfamily. Lipoprotein translocase (TC 3.A.1.125) family. The complex is composed of two ATP-binding proteins (LolD) and two transmembrane proteins (LolC and LolE).

Its subcellular location is the cell inner membrane. Part of the ABC transporter complex LolCDE involved in the translocation of mature outer membrane-directed lipoproteins, from the inner membrane to the periplasmic chaperone, LolA. Responsible for the formation of the LolA-lipoprotein complex in an ATP-dependent manner. The protein is Lipoprotein-releasing system ATP-binding protein LolD of Bordetella avium (strain 197N).